The following is a 363-amino-acid chain: Chorismate synthase (363 aa).

Residues 42–61 (QRDLDRRKPGTSRHTTQRQE) form a disordered region. NADP(+) is bound by residues Arg48 and Arg54. FMN-binding positions include 125–127 (RSS), 237–238 (NA), Gly277, 292–296 (KPTSS), and Arg318.

The protein belongs to the chorismate synthase family. Homotetramer. FMNH2 serves as cofactor.

The catalysed reaction is 5-O-(1-carboxyvinyl)-3-phosphoshikimate = chorismate + phosphate. The protein operates within metabolic intermediate biosynthesis; chorismate biosynthesis; chorismate from D-erythrose 4-phosphate and phosphoenolpyruvate: step 7/7. Its function is as follows. Catalyzes the anti-1,4-elimination of the C-3 phosphate and the C-6 proR hydrogen from 5-enolpyruvylshikimate-3-phosphate (EPSP) to yield chorismate, which is the branch point compound that serves as the starting substrate for the three terminal pathways of aromatic amino acid biosynthesis. This reaction introduces a second double bond into the aromatic ring system. This Pseudomonas aeruginosa (strain LESB58) protein is Chorismate synthase.